The primary structure comprises 968 residues: RNA polymerase-associated protein RapA (968 aa).

The Helicase ATP-binding domain maps to 164–334; it reads DVGRRHAPRV…FARLRLLDPN (171 aa). 177 to 184 is an ATP binding site; it reads DEVGLGKT. The DEAH box motif lies at 280–283; the sequence is DEAH. Residues 490 to 685 enclose the Helicase C-terminal domain; sequence RVEWLMGYLT…ALKAQLEQGR (196 aa).

The protein belongs to the SNF2/RAD54 helicase family. RapA subfamily. As to quaternary structure, interacts with the RNAP. Has a higher affinity for the core RNAP than for the holoenzyme. Its ATPase activity is stimulated by binding to RNAP.

In terms of biological role, transcription regulator that activates transcription by stimulating RNA polymerase (RNAP) recycling in case of stress conditions such as supercoiled DNA or high salt concentrations. Probably acts by releasing the RNAP, when it is trapped or immobilized on tightly supercoiled DNA. Does not activate transcription on linear DNA. Probably not involved in DNA repair. The protein is RNA polymerase-associated protein RapA of Salmonella paratyphi C (strain RKS4594).